The chain runs to 521 residues: Adenosylhomocysteinase-like 1 (521 aa).

Residues 1 to 92 are disordered; the sequence is MNNLADTVVV…EKVQKNSKGS (92 aa). Low complexity predominate over residues 54-73; that stretch reads RSLSASSTDSFSSASYTGSS. The substrate site is built by Asp-220 and Glu-245. Residue 246–248 participates in NAD(+) binding; the sequence is SVT. Substrate is bound by residues Lys-275 and Asp-279. NAD(+) is bound by residues 311-316, Glu-332, 388-390, Asn-435, Lys-515, 515-519, and Tyr-519; these read GDVGKG, MGH, and KPNYY.

Belongs to the adenosylhomocysteinase family. In terms of assembly, interacts with Ahcy; the interaction may negatively regulate Ahcy catalytic activity. NAD(+) serves as cofactor.

In terms of biological role, might play a role in the regulation of methionine metabolism possibly by binding and inactivating Ahcy. This chain is Adenosylhomocysteinase-like 1, found in Drosophila melanogaster (Fruit fly).